The chain runs to 167 residues: Photosystem I assembly protein Ycf3 (167 aa).

TPR repeat units follow at residues 35-68 (AFTY…EIDP), 72-105 (SYIL…NPSL), and 120-153 (GEQA…APSN).

This sequence belongs to the Ycf3 family.

It localises to the plastid. The protein localises to the chloroplast thylakoid membrane. Functionally, essential for the assembly of the photosystem I (PSI) complex. May act as a chaperone-like factor to guide the assembly of the PSI subunits. The protein is Photosystem I assembly protein Ycf3 of Marchantia polymorpha (Common liverwort).